Reading from the N-terminus, the 159-residue chain is Neuroglobin (159 aa).

The 149-residue stretch at 3-151 (KLSSKDKELI…VVASMSRGWA (149 aa)) folds into the Globin domain. Residues His66 and His98 each contribute to the heme b site.

The protein belongs to the globin family. As to quaternary structure, monomer. Homodimers and homotetramers. Mainly monomeric but also detected as part of homodimers and homotetramers.

The protein resides in the cytoplasm. Its subcellular location is the cytosol. It localises to the mitochondrion matrix. The catalysed reaction is Fe(III)-heme b-[protein] + nitric oxide + H2O = Fe(II)-heme b-[protein] + nitrite + 2 H(+). Monomeric globin with a bis-histidyl six-coordinate heme-iron atom through which it can bind dioxygen, carbon monoxide and nitric oxide. Could help transport oxygen and increase its availability to the metabolically active neuronal tissues, though its low quantity in tissues as well as its high affinity for dioxygen, which may limit its oxygen-releasing ability, argue against it. The ferrous/deoxygenated form exhibits a nitrite reductase activity and it could produce nitric oxide which in turn inhibits cellular respiration in response to hypoxia. In its ferrous/deoxygenated state, it may also exhibit GDI (Guanine nucleotide Dissociation Inhibitor) activity toward heterotrimeric G-alpha proteins, thereby regulating signal transduction to facilitate neuroprotective responses in the wake of hypoxia and associated oxidative stress. The chain is Neuroglobin (ngb) from Tetraodon nigroviridis (Spotted green pufferfish).